The primary structure comprises 379 residues: UDP-N-acetylglucosamine--N-acetylmuramyl-(pentapeptide) pyrophosphoryl-undecaprenol N-acetylglucosamine transferase (379 aa).

UDP-N-acetyl-alpha-D-glucosamine contacts are provided by residues 17–19 (TGG), N128, R169, S197, and Q298.

The protein belongs to the glycosyltransferase 28 family. MurG subfamily.

It localises to the cell inner membrane. It catalyses the reaction di-trans,octa-cis-undecaprenyl diphospho-N-acetyl-alpha-D-muramoyl-L-alanyl-D-glutamyl-meso-2,6-diaminopimeloyl-D-alanyl-D-alanine + UDP-N-acetyl-alpha-D-glucosamine = di-trans,octa-cis-undecaprenyl diphospho-[N-acetyl-alpha-D-glucosaminyl-(1-&gt;4)]-N-acetyl-alpha-D-muramoyl-L-alanyl-D-glutamyl-meso-2,6-diaminopimeloyl-D-alanyl-D-alanine + UDP + H(+). The protein operates within cell wall biogenesis; peptidoglycan biosynthesis. Its function is as follows. Cell wall formation. Catalyzes the transfer of a GlcNAc subunit on undecaprenyl-pyrophosphoryl-MurNAc-pentapeptide (lipid intermediate I) to form undecaprenyl-pyrophosphoryl-MurNAc-(pentapeptide)GlcNAc (lipid intermediate II). In Brucella melitensis biotype 2 (strain ATCC 23457), this protein is UDP-N-acetylglucosamine--N-acetylmuramyl-(pentapeptide) pyrophosphoryl-undecaprenol N-acetylglucosamine transferase.